Here is a 967-residue protein sequence, read N- to C-terminus: Isoleucine--tRNA ligase (967 aa).

The short motif at 68 to 78 (PYANGTLHMGH) is the 'HIGH' region element. L-isoleucyl-5'-AMP is bound at residue Glu583. The short motif at 624-628 (KMSKS) is the 'KMSKS' region element. Lys627 contributes to the ATP binding site. The Zn(2+) site is built by Cys937, Cys940, Cys957, and Cys960.

The protein belongs to the class-I aminoacyl-tRNA synthetase family. IleS type 1 subfamily. As to quaternary structure, monomer. The cofactor is Zn(2+).

The protein resides in the cytoplasm. It catalyses the reaction tRNA(Ile) + L-isoleucine + ATP = L-isoleucyl-tRNA(Ile) + AMP + diphosphate. Catalyzes the attachment of isoleucine to tRNA(Ile). As IleRS can inadvertently accommodate and process structurally similar amino acids such as valine, to avoid such errors it has two additional distinct tRNA(Ile)-dependent editing activities. One activity is designated as 'pretransfer' editing and involves the hydrolysis of activated Val-AMP. The other activity is designated 'posttransfer' editing and involves deacylation of mischarged Val-tRNA(Ile). The protein is Isoleucine--tRNA ligase of Prochlorococcus marinus (strain NATL2A).